Consider the following 421-residue polypeptide: Tyrosine--tRNA ligase (421 aa).

Tyrosine 38 contacts L-tyrosine. Residues 43–52 (PTGDSLHIGH) carry the 'HIGH' region motif. The L-tyrosine site is built by tyrosine 169 and glutamine 173. The short motif at 231–235 (KFGKS) is the 'KMSKS' region element. Lysine 234 is an ATP binding site. The S4 RNA-binding domain occupies 353-419 (KNLVDFLVDT…GKKKYTLVHI (67 aa)).

It belongs to the class-I aminoacyl-tRNA synthetase family. TyrS type 1 subfamily. In terms of assembly, homodimer.

It localises to the cytoplasm. The catalysed reaction is tRNA(Tyr) + L-tyrosine + ATP = L-tyrosyl-tRNA(Tyr) + AMP + diphosphate + H(+). Catalyzes the attachment of tyrosine to tRNA(Tyr) in a two-step reaction: tyrosine is first activated by ATP to form Tyr-AMP and then transferred to the acceptor end of tRNA(Tyr). The polypeptide is Tyrosine--tRNA ligase (Lactobacillus delbrueckii subsp. bulgaricus (strain ATCC BAA-365 / Lb-18)).